We begin with the raw amino-acid sequence, 411 residues long: Phospholipase ABHD3 (411 aa).

A helical; Signal-anchor for type II membrane protein transmembrane segment spans residues 25 to 45; the sequence is VGFFGSGVGLSLILGFSVAYA. In terms of domain architecture, AB hydrolase-1 spans 140–233; it reads PTILLLPGLT…MLLLNYLGKI (94 aa). Active-site charge relay system residues include Ser220, Asp346, and His375.

The protein belongs to the AB hydrolase superfamily. AB hydrolase 4 family. As to expression, widely expressed with higher expression in liver.

It localises to the membrane. It carries out the reaction a 1,2-diacyl-sn-glycero-3-phosphocholine + H2O = a 1-acyl-sn-glycero-3-phosphocholine + a fatty acid + H(+). The catalysed reaction is a 1,2-diacyl-sn-glycero-3-phosphocholine + H2O = a 2-acyl-sn-glycero-3-phosphocholine + a fatty acid + H(+). It catalyses the reaction 1-tetradecanoyl-2-(9Z,12Z-octadecadienoyl)-sn-glycero-3-phosphocholine + H2O = 2-(9Z,12Z-octadecadienoyl)-sn-glycero-3-phosphocholine + tetradecanoate + H(+). The enzyme catalyses 1-tetradecanoyl-2-(9Z,12Z-octadecadienoyl)-sn-glycero-3-phosphocholine + H2O = 1-tetradecanoyl-sn-glycero-3-phosphocholine + (9Z,12Z)-octadecadienoate + H(+). It carries out the reaction 1-tetradecanoyl-2-(5Z,8Z,11Z,14Z-eicosatetraenoyl)-sn-glycero-3-phosphocholine + H2O = 2-(5Z,8Z,11Z,14Z)-eicosatetraenoyl-sn-glycero-3-phosphocholine + tetradecanoate + H(+). The catalysed reaction is 1-tetradecanoyl-2-(4Z,7Z,10Z,13Z,16Z,19Z-docosahexaenoyl)-sn-glycero-3-phosphocholine + H2O = 2-(4Z,7Z,10Z,13Z,16Z,19Z-docosahexaenoyl)-sn-glycero-3-phosphocholine + tetradecanoate + H(+). It catalyses the reaction 1,2-ditetradecanoyl-sn-glycero-3-phosphocholine + H2O = 2-tetradecanoyl-sn-glycero-3-phosphocholine + tetradecanoate + H(+). The enzyme catalyses 1-octadecanoyl-2-acetyl-sn-glycero-3-phosphocholine + H2O = 1-octadecanoyl-sn-glycero-3-phosphocholine + acetate + H(+). It carries out the reaction 1,2-ditetradecanoyl-sn-glycero-3-phosphocholine + H2O = 1-tetradecanoyl-sn-glycero-3-phosphocholine + tetradecanoate + H(+). The catalysed reaction is 1-octadecanoyl-2-pentanoyl-sn-glycero-3-phosphocholine + H2O = pentanoate + 1-octadecanoyl-sn-glycero-3-phosphocholine + H(+). It catalyses the reaction 1-octadecanoyl-2-hexanoyl-sn-glycero-3-phosphocholine + H2O = hexanoate + 1-octadecanoyl-sn-glycero-3-phosphocholine + H(+). The enzyme catalyses 1-octadecanoyl-2-octanoyl-sn-glycero-3-phosphocholine + H2O = 1-octadecanoyl-sn-glycero-3-phosphocholine + octanoate + H(+). It carries out the reaction 1-octadecanoyl-2-nonanoyl-sn-glycero-3-phosphocholine + H2O = nonanoate + 1-octadecanoyl-sn-glycero-3-phosphocholine + H(+). The catalysed reaction is 1-O-hexadecyl-2-nonadioyl-sn-glycero-3-phosphocholine + H2O = nonanedioate + 1-O-hexadecyl-sn-glycero-3-phosphocholine + H(+). It catalyses the reaction 1-hexadecanoyl-2-nonadioyl-sn-glycero-3-phosphocholine + H2O = nonanedioate + 1-hexadecanoyl-sn-glycero-3-phosphocholine + H(+). The enzyme catalyses 1-hexadecanoyl-2-(9-oxononanoyl)-sn-glycero-3-phosphocholine + H2O = 9-oxononanoate + 1-hexadecanoyl-sn-glycero-3-phosphocholine + H(+). It carries out the reaction 1-hexadecanoyl-2-(5-oxopentanoyl)-sn-glycero-3-phosphocholine + H2O = 5-oxopentanoate + 1-hexadecanoyl-sn-glycero-3-phosphocholine + H(+). The catalysed reaction is 1-hexadecanoyl-2-glutaroyl-sn-glycero-3-phosphocholine + H2O = glutarate + 1-hexadecanoyl-sn-glycero-3-phosphocholine + H(+). It catalyses the reaction 1-O-hexadecyl-2-acetyl-sn-glycero-3-phosphocholine + H2O = 1-O-hexadecyl-sn-glycero-3-phosphocholine + acetate + H(+). Phospholipase that may play a role in phospholipids remodeling. May selectively cleave myristate (C14)-containing phosphatidylcholines through its predominant phospholipase 1 activity, cleaving preferentially acyl groups in sn1 position. In parallel, may have a minor phospholipase 2 activity acting on acyl groups in position sn2. In addition to (C14)-containing phosphatidylcholines, may also act on other medium-chain-containing and oxidatively truncated phospholipids. The protein is Phospholipase ABHD3 of Mus musculus (Mouse).